Reading from the N-terminus, the 132-residue chain is D-ribose pyranase (132 aa).

Residue H20 is the Proton donor of the active site. Substrate is bound by residues D28, H99, and 121-123; that span reads YSN.

The protein belongs to the RbsD / FucU family. RbsD subfamily. Homodecamer.

It is found in the cytoplasm. It carries out the reaction beta-D-ribopyranose = beta-D-ribofuranose. It functions in the pathway carbohydrate metabolism; D-ribose degradation; D-ribose 5-phosphate from beta-D-ribopyranose: step 1/2. Functionally, catalyzes the interconversion of beta-pyran and beta-furan forms of D-ribose. This Pseudomonas putida (strain W619) protein is D-ribose pyranase.